The primary structure comprises 145 residues: Putative pre-16S rRNA nuclease (145 aa).

The protein belongs to the YqgF nuclease family.

It is found in the cytoplasm. Its function is as follows. Could be a nuclease involved in processing of the 5'-end of pre-16S rRNA. The protein is Putative pre-16S rRNA nuclease of Tropheryma whipplei (strain Twist) (Whipple's bacillus).